We begin with the raw amino-acid sequence, 389 residues long: MVSVSEIRNAQRAEGPATTLAIGTANPTNCVEQSTYPDFYFKITNSEHKTELKEKFQRMCDKSMIKRRYMYLTEEILKENPSVCEIMAPSLDAWQDMVVVEVPRLGKEAAVKAIKEWGQPKSKITHLIVCTTSGVDMPGADYQLTKLLGLRPYVKRYMMYQQGCFAGGTVLRLAKDLAENNKGARVLVVCSEVTAVTFRGPSDTHLDSLVGQALFGDGAAALIVGSDPVPEIEKPIFEMVWTAQTIAPDSEGAIDGHLREAGLTFHLLKDVPGIVSKNINKALVEAFEPLGISDYNSIFWIAHPGGPAILDQVEQKLALKPEKMKATREVLSEYGNMSSACVLFILDEMRKKSAQDGLKTTGEGLEWGVLFGFGPGLTIETVVLRSVAI.

The active site involves Cys164.

The protein belongs to the thiolase-like superfamily. Chalcone/stilbene synthases family.

It carries out the reaction (E)-4-coumaroyl-CoA + 3 malonyl-CoA + 3 H(+) = 2',4,4',6'-tetrahydroxychalcone + 3 CO2 + 4 CoA. It participates in secondary metabolite biosynthesis; flavonoid biosynthesis. The primary product of this enzyme is 4,2',4',6'-tetrahydroxychalcone (also termed naringenin-chalcone or chalcone) which can under specific conditions spontaneously isomerize into naringenin. The sequence is that of Chalcone synthase 4-2 (CHS4-2) from Medicago sativa (Alfalfa).